We begin with the raw amino-acid sequence, 431 residues long: STE20-related kinase adapter protein alpha (431 aa).

Phosphoserine occurs at positions 2 and 46. The Protein kinase domain occupies 69-379; it reads YELLTVIGKG…ASTLLNHSFF (311 aa). A disordered region spans residues 310 to 347; the sequence is LTMSPSRSVANSGLSDSLTTSTPRPSNGDSPSHPYHRT. Residues 312-339 show a composition bias toward polar residues; that stretch reads MSPSRSVANSGLSDSLTTSTPRPSNGDS. 2 positions are modified to phosphothreonine; by LKB1: Thr329 and Thr419.

Belongs to the protein kinase superfamily. STE Ser/Thr protein kinase family. STE20 subfamily. As to quaternary structure, component of a trimeric complex composed of STK11/LKB1, STRAD (STRADA or STRADB) and CAB39/MO25 (CAB39/MO25alpha or CAB39L/MO25beta): the complex tethers STK11/LKB1 in the cytoplasm and stimulates its catalytic activity.

The protein resides in the nucleus. It is found in the cytoplasm. Pseudokinase which, in complex with CAB39/MO25 (CAB39/MO25alpha or CAB39L/MO25beta), binds to and activates STK11/LKB1. Adopts a closed conformation typical of active protein kinases and binds STK11/LKB1 as a pseudosubstrate, promoting conformational change of STK11/LKB1 in an active conformation. This is STE20-related kinase adapter protein alpha (STRADA) from Homo sapiens (Human).